The chain runs to 139 residues: Transcription antitermination protein NusB (139 aa).

The protein belongs to the NusB family.

Its function is as follows. Involved in transcription antitermination. Required for transcription of ribosomal RNA (rRNA) genes. Binds specifically to the boxA antiterminator sequence of the ribosomal RNA (rrn) operons. This chain is Transcription antitermination protein NusB, found in Escherichia coli (strain K12 / MC4100 / BW2952).